The chain runs to 436 residues: Enolase (436 aa).

Positions 159 and 168 each coordinate substrate. Residue E211 is the Proton donor of the active site. Mg(2+) is bound by residues D246, E295, and D322. Positions 295 and 322 each coordinate substrate. K347 serves as the catalytic Proton acceptor. Residues 374-377 (SHRS) and K398 contribute to the substrate site.

The protein belongs to the enolase family. Homodimer. It depends on Mg(2+) as a cofactor.

It localises to the cytoplasm. The catalysed reaction is (2R)-2-phosphoglycerate = phosphoenolpyruvate + H2O. The protein operates within carbohydrate degradation; glycolysis; pyruvate from D-glyceraldehyde 3-phosphate: step 4/5. This Neocallimastix frontalis (Rumen fungus) protein is Enolase.